A 186-amino-acid polypeptide reads, in one-letter code: Bilin biosynthesis protein CpeZ (186 aa).

Its function is as follows. Involved in the biosynthesis of bilin. The sequence is that of Bilin biosynthesis protein CpeZ (cpeZ) from Synechococcus sp. (strain WH8020).